The following is a 221-amino-acid chain: PKHD-type hydroxylase Pro_1271 (221 aa).

The Fe2OG dioxygenase domain occupies 80-174 (KVHGVMFSKS…RIVCVGWIQS (95 aa)). Positions 98, 100, and 155 each coordinate Fe cation. R165 contributes to the 2-oxoglutarate binding site.

Fe(2+) is required as a cofactor. Requires L-ascorbate as cofactor.

The sequence is that of PKHD-type hydroxylase Pro_1271 from Prochlorococcus marinus (strain SARG / CCMP1375 / SS120).